Consider the following 128-residue polypeptide: Adrenodoxin (128 aa).

Ser3 is subject to Phosphoserine. N6-acetyllysine; alternate is present on Lys6. Residue Lys6 is modified to N6-succinyllysine; alternate. Residues 7 to 111 (VTVNFINRDG…NMTVRVPDAV (105 aa)) form the 2Fe-2S ferredoxin-type domain. The [2Fe-2S] cluster site is built by Cys46, Cys52, Cys55, and Cys92. Lys98 bears the N6-succinyllysine mark. Residue Ser117 is modified to Phosphoserine.

Belongs to the adrenodoxin/putidaredoxin family. Interacts with CYP11A1. [2Fe-2S] cluster serves as cofactor.

Its subcellular location is the mitochondrion matrix. Functionally, essential for the synthesis of various steroid hormones. Participates in the reduction of mitochondrial cytochrome P450 for steroidogenesis. Transfers electrons from adrenodoxin reductase to CYP11A1, a cytochrome P450 that catalyzes cholesterol side-chain cleavage. Does not form a ternary complex with adrenodoxin reductase and CYP11A1 but shuttles between the two enzymes to transfer electrons. This is Adrenodoxin (FDX1) from Ovis aries (Sheep).